We begin with the raw amino-acid sequence, 454 residues long: MRSDTREEISAALDAYHASLSRVLDLKCDALTTPELLACLQRLEVERRRQGAAEHALINQLAGQACEEELGGTLRTALANRLHITPGEASRRIAEAEDLGERRALTGEPLPAQLTATAAAQREGKIGREHIKEIQAFFKELSAAVDLGIREAAEAQLAELATSRRPDHLHGLATQLMDWLHPDGNFSDQERARKRGITMGKQEFDGMSRISGLLTPELRATIEAVLAKLAAPGACNPDDQTPVVDDTPDADAVRRDTRSQAQRHHDGLLAGLRGLLASGELGQHRGLPVTVVVSTTLKELEAATGKGVTGGGSRVPMSDLIRMASNAHHYLALFDGAKPLALYHTKRLASPAQRIMLYAKDRGCSRPGCDAPAYHSEVHHVTPWTTTHRTDINDLTLACGPDNRLVEKGWKTRKNAKGDTEWLPPAHLDHGQPRINRYHHPEKILCEPDDDEPH.

Positions 364–405 constitute an HNH domain; the sequence is CSRPGCDAPAYHSEVHHVTPWTTTHRTDINDLTLACGPDNRL. Positions 415–434 are disordered; sequence NAKGDTEWLPPAHLDHGQPR.

It belongs to the Rv1128c/1148c/1588c/1702c/1945/3466 family.

This is an uncharacterized protein from Mycobacterium tuberculosis (strain CDC 1551 / Oshkosh).